The chain runs to 346 residues: UDP-3-O-acylglucosamine N-acyltransferase (346 aa).

The Proton acceptor role is filled by H253.

Belongs to the transferase hexapeptide repeat family. LpxD subfamily. In terms of assembly, homotrimer.

The catalysed reaction is a UDP-3-O-[(3R)-3-hydroxyacyl]-alpha-D-glucosamine + a (3R)-hydroxyacyl-[ACP] = a UDP-2-N,3-O-bis[(3R)-3-hydroxyacyl]-alpha-D-glucosamine + holo-[ACP] + H(+). The protein operates within bacterial outer membrane biogenesis; LPS lipid A biosynthesis. In terms of biological role, catalyzes the N-acylation of UDP-3-O-acylglucosamine using 3-hydroxyacyl-ACP as the acyl donor. Is involved in the biosynthesis of lipid A, a phosphorylated glycolipid that anchors the lipopolysaccharide to the outer membrane of the cell. The sequence is that of UDP-3-O-acylglucosamine N-acyltransferase from Rickettsia akari (strain Hartford).